The following is a 697-amino-acid chain: Sentrin-specific protease (697 aa).

Positions 1-14 (MSRRSDLSDKDSQS) are enriched in basic and acidic residues. Disordered regions lie at residues 1 to 47 (MSRR…QGLG) and 365 to 387 (SEES…SDSY). The Nuclear localization signal signature appears at 15 to 19 (RKRHW). Positions 462–467 (KVEKKK) match the Nuclear localization signal motif. Residues 501–664 (IQICKKDLAT…VFSCQFGEWA (164 aa)) form a protease region. Catalysis depends on residues His585, Asp602, and Cys653.

It belongs to the peptidase C48 family.

It localises to the nucleus envelope. In terms of biological role, protease that deconjugates smo-1 from targeted proteins and may catalyze the processing of smo-1 to its mature form. The sequence is that of Sentrin-specific protease (ulp-1) from Caenorhabditis elegans.